The sequence spans 224 residues: UPF0758 protein Sde_3678 (224 aa).

The 123-residue stretch at 102–224 (SLTSTTAVKQ…AVSFAERGWI (123 aa)) folds into the MPN domain. 3 residues coordinate Zn(2+): His173, His175, and Asp186. Residues 173 to 186 (HNHPSGIAEPSEPD) carry the JAMM motif motif.

The protein belongs to the UPF0758 family.

This is UPF0758 protein Sde_3678 from Saccharophagus degradans (strain 2-40 / ATCC 43961 / DSM 17024).